A 187-amino-acid polypeptide reads, in one-letter code: Small ribosomal subunit protein uS5 (187 aa).

One can recognise an S5 DRBM domain in the interval 20–83 (FADRLVAINR…EQAKRQMIRV (64 aa)). Positions 155-187 (KKEQSPRSVAQRRGKKVADILPKRDEAPAEAEA) are disordered. Residues 170–181 (KVADILPKRDEA) are compositionally biased toward basic and acidic residues.

The protein belongs to the universal ribosomal protein uS5 family. In terms of assembly, part of the 30S ribosomal subunit. Contacts proteins S4 and S8.

Its function is as follows. With S4 and S12 plays an important role in translational accuracy. In terms of biological role, located at the back of the 30S subunit body where it stabilizes the conformation of the head with respect to the body. This chain is Small ribosomal subunit protein uS5, found in Ruegeria sp. (strain TM1040) (Silicibacter sp.).